Reading from the N-terminus, the 111-residue chain is MELLKVAILFAVTAVAEIVGCYLPWLVVKQGKSAWLLLPAAVSLSLFAWLLTLHPTAAGRTYAAYGGMYIAVALVWLHVVDGVALTRWDFVGAAIALAGMSVIALQPATDT.

A run of 4 helical transmembrane segments spans residues 8–28 (ILFA…WLVV), 33–53 (SAWL…LLTL), 65–85 (YGGM…GVAL), and 88–108 (WDFV…LQPA).

Belongs to the UPF0060 family.

Its subcellular location is the cell inner membrane. The sequence is that of UPF0060 membrane protein Ajs_1473 from Acidovorax sp. (strain JS42).